Reading from the N-terminus, the 207-residue chain is Outer-membrane lipoprotein carrier protein (207 aa).

A signal peptide spans 1 to 21 (MRLIRMLLATALTFSVIPAHA).

Belongs to the LolA family. In terms of assembly, monomer.

The protein localises to the periplasm. Participates in the translocation of lipoproteins from the inner membrane to the outer membrane. Only forms a complex with a lipoprotein if the residue after the N-terminal Cys is not an aspartate (The Asp acts as a targeting signal to indicate that the lipoprotein should stay in the inner membrane). The chain is Outer-membrane lipoprotein carrier protein from Pseudomonas syringae pv. tomato (strain ATCC BAA-871 / DC3000).